The chain runs to 219 residues: MARSKSSEKWLKEHFKDPFVQRAMKEGYRSRASYKLLEIQQKDHLIRPGMRVLDVGAAPGGWTQVAAPLIGRKGRLVAVDRLAMDPVADATVICGDVYDDAILAACQEALPGGADLIMSDMAPNMSGIASVDQARAIDLAELALDMAHRWLVPGGALLIKVFMGSGAEELRRALRRDFKKIVVRKPEASRARSTEQYWLALDFQGVAQERLDNGGASSL.

Glycine 60, tryptophan 62, aspartate 80, aspartate 96, and aspartate 120 together coordinate S-adenosyl-L-methionine. Residue lysine 160 is the Proton acceptor of the active site.

The protein belongs to the class I-like SAM-binding methyltransferase superfamily. RNA methyltransferase RlmE family.

It localises to the cytoplasm. The catalysed reaction is uridine(2552) in 23S rRNA + S-adenosyl-L-methionine = 2'-O-methyluridine(2552) in 23S rRNA + S-adenosyl-L-homocysteine + H(+). In terms of biological role, specifically methylates the uridine in position 2552 of 23S rRNA at the 2'-O position of the ribose in the fully assembled 50S ribosomal subunit. The protein is Ribosomal RNA large subunit methyltransferase E of Acidithiobacillus ferrooxidans (strain ATCC 23270 / DSM 14882 / CIP 104768 / NCIMB 8455) (Ferrobacillus ferrooxidans (strain ATCC 23270)).